Here is a 678-residue protein sequence, read N- to C-terminus: DNA ligase (678 aa).

NAD(+) is bound by residues 32-36 (DSEYD), 81-82 (SL), and glutamate 113. Lysine 115 acts as the N6-AMP-lysine intermediate in catalysis. Residues arginine 136, glutamate 174, lysine 291, and lysine 315 each contribute to the NAD(+) site. Positions 409, 412, 427, and 433 each coordinate Zn(2+). The region spanning 596–678 (ASDNPFAGKT…MRLLGESSDA (83 aa)) is the BRCT domain.

This sequence belongs to the NAD-dependent DNA ligase family. LigA subfamily. Requires Mg(2+) as cofactor. The cofactor is Mn(2+).

The catalysed reaction is NAD(+) + (deoxyribonucleotide)n-3'-hydroxyl + 5'-phospho-(deoxyribonucleotide)m = (deoxyribonucleotide)n+m + AMP + beta-nicotinamide D-nucleotide.. In terms of biological role, DNA ligase that catalyzes the formation of phosphodiester linkages between 5'-phosphoryl and 3'-hydroxyl groups in double-stranded DNA using NAD as a coenzyme and as the energy source for the reaction. It is essential for DNA replication and repair of damaged DNA. In Sodalis glossinidius (strain morsitans), this protein is DNA ligase.